Here is a 154-residue protein sequence, read N- to C-terminus: Prefoldin subunit alpha (154 aa).

Residues 119–154 are disordered; the sequence is EKAEVETEMEELEQQAQQMQQQQMQQMMQQQEQEDE. The span at 132 to 154 shows a compositional bias: low complexity; that stretch reads QQAQQMQQQQMQQMMQQQEQEDE.

Belongs to the prefoldin subunit alpha family. In terms of assembly, heterohexamer of two alpha and four beta subunits.

It is found in the cytoplasm. Molecular chaperone capable of stabilizing a range of proteins. Seems to fulfill an ATP-independent, HSP70-like function in archaeal de novo protein folding. In Haloarcula marismortui (strain ATCC 43049 / DSM 3752 / JCM 8966 / VKM B-1809) (Halobacterium marismortui), this protein is Prefoldin subunit alpha.